The primary structure comprises 880 residues: Valine--tRNA ligase (880 aa).

Positions 47-57 (PNITGKLHLGH) match the 'HIGH' region motif. A 'KMSKS' region motif is present at residues 526-530 (KMSKS). ATP is bound at residue Lys-529. A coiled-coil region spans residues 810-845 (LLDLVDREKELERLNKEKTKLEGEILRVEKKLSNER).

This sequence belongs to the class-I aminoacyl-tRNA synthetase family. ValS type 1 subfamily. In terms of assembly, monomer.

The protein resides in the cytoplasm. It carries out the reaction tRNA(Val) + L-valine + ATP = L-valyl-tRNA(Val) + AMP + diphosphate. Its function is as follows. Catalyzes the attachment of valine to tRNA(Val). As ValRS can inadvertently accommodate and process structurally similar amino acids such as threonine, to avoid such errors, it has a 'posttransfer' editing activity that hydrolyzes mischarged Thr-tRNA(Val) in a tRNA-dependent manner. This chain is Valine--tRNA ligase, found in Clostridium perfringens (strain 13 / Type A).